The chain runs to 327 residues: Glycerol-3-phosphate dehydrogenase [NAD(P)+] (327 aa).

Residues Trp-15, Arg-35, and Lys-109 each contribute to the NADPH site. Lys-109, Gly-137, and Ser-139 together coordinate sn-glycerol 3-phosphate. An NADPH-binding site is contributed by Ala-141. 5 residues coordinate sn-glycerol 3-phosphate: Lys-192, Asp-245, Ser-255, Arg-256, and Asn-257. Lys-192 functions as the Proton acceptor in the catalytic mechanism. NADPH is bound at residue Arg-256. 2 residues coordinate NADPH: Leu-275 and Glu-277.

It belongs to the NAD-dependent glycerol-3-phosphate dehydrogenase family.

The protein localises to the cytoplasm. The catalysed reaction is sn-glycerol 3-phosphate + NAD(+) = dihydroxyacetone phosphate + NADH + H(+). It carries out the reaction sn-glycerol 3-phosphate + NADP(+) = dihydroxyacetone phosphate + NADPH + H(+). It participates in membrane lipid metabolism; glycerophospholipid metabolism. Its function is as follows. Catalyzes the reduction of the glycolytic intermediate dihydroxyacetone phosphate (DHAP) to sn-glycerol 3-phosphate (G3P), the key precursor for phospholipid synthesis. The protein is Glycerol-3-phosphate dehydrogenase [NAD(P)+] of Chelativorans sp. (strain BNC1).